Here is a 380-residue protein sequence, read N- to C-terminus: Mitogen-activated protein kinase 3 (380 aa).

Position 2 is an N-acetylalanine (Ala-2). In terms of domain architecture, Protein kinase spans 43 to 331; sequence YTQLQYIGEG…VEEALAHPYL (289 aa). Residues 49–57 and Lys-72 contribute to the ATP site; that span reads IGEGAYGMV. The active-site Proton acceptor is Asp-167. The residue at position 199 (Thr-199) is a Phosphothreonine. Thr-203 bears the Phosphothreonine; by MAP2K1 and MAP2K2 mark. The TXY motif lies at 203–205; it reads TEY. Phosphotyrosine; by MAP2K1 and MAP2K2 is present on Tyr-205. The residue at position 208 (Thr-208) is a Phosphothreonine; by autocatalysis.

This sequence belongs to the protein kinase superfamily. CMGC Ser/Thr protein kinase family. MAP kinase subfamily. As to quaternary structure, binds both upstream activators and downstream substrates in multimolecular complexes. Found in a complex with at least BRAF, HRAS, MAP2K1/MEK1, MAPK3 and RGS14. Interacts with ADAM15, ARRB2, CANX, DAPK1 (via death domain), HSF4, IER3, MAP2K1/MEK1, MORG1, NISCH, PEA15, SGK1 and MKNK2. MKNK2 isoform 1 binding prevents from dephosphorylation and inactivation. Interacts with TPR. Interacts with HSF1 (via D domain and preferentially with hyperphosphorylated form); this interaction occurs upon heat shock. Interacts with CDKN2AIP. Interacts with CAVIN4. Interacts with GIT1; this interaction is necessary for MAPK3 localization to focal adhesions. Interacts with ZNF263. Interacts with EBF4. It depends on Mg(2+) as a cofactor. Phosphorylated upon FLT3 and KIT signaling. Ligand-activated ALK induces tyrosine phosphorylation. Dephosphorylated by PTPRJ at Tyr-205. Dually phosphorylated on Thr-203 and Tyr-205, which activates the enzyme. In terms of processing, ubiquitinated by TRIM15 via 'Lys-63'-linked ubiquitination; leading to activation. Deubiquitinated by CYLD. In terms of tissue distribution, highest levels within the nervous system, expressed in different tissues, mostly in intestine, placenta and lung.

The protein resides in the cytoplasm. It localises to the nucleus. Its subcellular location is the membrane. The protein localises to the caveola. It is found in the cell junction. The protein resides in the focal adhesion. The catalysed reaction is L-seryl-[protein] + ATP = O-phospho-L-seryl-[protein] + ADP + H(+). It catalyses the reaction L-threonyl-[protein] + ATP = O-phospho-L-threonyl-[protein] + ADP + H(+). Its activity is regulated as follows. Phosphorylated by MAP2K1/MEK1 and MAP2K2/MEK2 on Thr-203 and Tyr-205 in response to external stimuli like insulin or NGF. Both phosphorylations are required for activity. This phosphorylation causes dramatic conformational changes, which enable full activation and interaction of MAPK1/ERK2 with its substrates. Dephosphorylated and inactivated by DUSP3, DUSP6 and DUSP9. Functionally, serine/threonine kinase which acts as an essential component of the MAP kinase signal transduction pathway. MAPK1/ERK2 and MAPK3/ERK1 are the 2 MAPKs which play an important role in the MAPK/ERK cascade. They participate also in a signaling cascade initiated by activated KIT and KITLG/SCF. Depending on the cellular context, the MAPK/ERK cascade mediates diverse biological functions such as cell growth, adhesion, survival and differentiation through the regulation of transcription, translation, cytoskeletal rearrangements. The MAPK/ERK cascade also plays a role in initiation and regulation of meiosis, mitosis, and postmitotic functions in differentiated cells by phosphorylating a number of transcription factors. About 160 substrates have already been discovered for ERKs. Many of these substrates are localized in the nucleus, and seem to participate in the regulation of transcription upon stimulation. However, other substrates are found in the cytosol as well as in other cellular organelles, and those are responsible for processes such as translation, mitosis and apoptosis. Moreover, the MAPK/ERK cascade is also involved in the regulation of the endosomal dynamics, including lysosome processing and endosome cycling through the perinuclear recycling compartment (PNRC); as well as in the fragmentation of the Golgi apparatus during mitosis. The substrates include transcription factors (such as ATF2, BCL6, ELK1, ERF, FOS, HSF4 or SPZ1), cytoskeletal elements (such as CANX, CTTN, GJA1, MAP2, MAPT, PXN, SORBS3 or STMN1), regulators of apoptosis (such as BAD, BTG2, CASP9, DAPK1, IER3, MCL1 or PPARG), regulators of translation (such as EIF4EBP1) and a variety of other signaling-related molecules (like ARHGEF2, DEPTOR, FRS2 or GRB10). Protein kinases (such as RAF1, RPS6KA1/RSK1, RPS6KA3/RSK2, RPS6KA2/RSK3, RPS6KA6/RSK4, SYK, MKNK1/MNK1, MKNK2/MNK2, RPS6KA5/MSK1, RPS6KA4/MSK2, MAPKAPK3 or MAPKAPK5) and phosphatases (such as DUSP1, DUSP4, DUSP6 or DUSP16) are other substrates which enable the propagation the MAPK/ERK signal to additional cytosolic and nuclear targets, thereby extending the specificity of the cascade. This chain is Mitogen-activated protein kinase 3 (Mapk3), found in Rattus norvegicus (Rat).